Here is a 563-residue protein sequence, read N- to C-terminus: Tripeptidyl-peptidase 1 (563 aa).

The signal sequence occupies residues 1–19; it reads MGLQACLLGLFALILSGKC. Residues 20 to 195 constitute a propeptide, removed in mature form; sequence SYSPEPDQRR…PEPQVTGTVG (176 aa). A disulfide bond links Cys111 and Cys122. Residues 199–563 enclose the Peptidase S53 domain; the sequence is GVTPSVIRKR…PALLKTLLNP (365 aa). Asn210 and Asn222 each carry an N-linked (GlcNAc...) asparagine glycan. Residues Glu272 and Asp276 each act as charge relay system in the active site. N-linked (GlcNAc...) asparagine glycosylation is found at Asn286, Asn313, and Asn443. 2 disulfide bridges follow: Cys365/Cys526 and Cys522/Cys537. Ser475 (charge relay system) is an active-site residue. Residues Asp517 and Val518 each contribute to the Ca(2+) site. Ca(2+) is bound by residues Gly539, Gly541, and Asp543.

Monomer. Interacts with CLN5. Interacts with CLN3. The cofactor is Ca(2+). Post-translationally, activated by autocatalytic proteolytical processing upon acidification. N-glycosylation is required for processing and activity. Detected in all tissues examined with highest levels in heart and placenta and relatively similar levels in other tissues.

The protein resides in the lysosome. Its subcellular location is the melanosome. The catalysed reaction is Release of an N-terminal tripeptide from a polypeptide, but also has endopeptidase activity.. Inhibited by diisopropyl fluorophosphate (DFP). Lysosomal serine protease with tripeptidyl-peptidase I activity. May act as a non-specific lysosomal peptidase which generates tripeptides from the breakdown products produced by lysosomal proteinases. Requires substrates with an unsubstituted N-terminus. This is Tripeptidyl-peptidase 1 (TPP1) from Homo sapiens (Human).